A 694-amino-acid chain; its full sequence is E3 ubiquitin-protein ligase SPL11 (694 aa).

Residues 1 to 12 (MAGDRAEEEEGE) show a composition bias toward acidic residues. Disordered regions lie at residues 1–21 (MAGD…ARAA) and 343–363 (NGME…ACSS). The 75-residue stretch at 272 to 346 (TIPDEFRCPI…SQWCETNGME (75 aa)) folds into the U-box domain. The segment covering 350 to 363 (RSTQPNKPTPACSS) has biased composition (polar residues). 6 ARM repeats span residues 398–438 (NANN…NLSI), 439–479 (HEDN…SLSV), 480–520 (IDEY…NLCI), 521–561 (YQGN…ILSS), 562–602 (HPEG…HLCS), and 603–650 (GEHH…FLVQ). Positions 650-667 (QQQEEQESQSQASAQVPP) are enriched in low complexity. Residues 650–694 (QQQEEQESQSQASAQVPPQATPEQVPENDIPEQLDSPASQYPMVV) form a disordered region.

In terms of assembly, interacts with SPIN1 (via N-terminus). As to expression, highly expressed in leaf, at intermediate levels in shoot and weakly in root.

It localises to the nucleus. The protein resides in the cytoplasm. The enzyme catalyses S-ubiquitinyl-[E2 ubiquitin-conjugating enzyme]-L-cysteine + [acceptor protein]-L-lysine = [E2 ubiquitin-conjugating enzyme]-L-cysteine + N(6)-ubiquitinyl-[acceptor protein]-L-lysine.. The protein operates within protein modification; protein ubiquitination. Functionally, E3 ubiquitin-protein ligase that negatively regulates programmed cell death and disease resistance. Participates in flowering time control by mediating ubiquitination and subsequent proteasomal degradation of SPIN1. This chain is E3 ubiquitin-protein ligase SPL11 (SPL11), found in Oryza sativa subsp. japonica (Rice).